We begin with the raw amino-acid sequence, 218 residues long: Autophagy-related protein 101 (218 aa).

Belongs to the ATG101 family.

The protein resides in the cytoplasm. The protein localises to the preautophagosomal structure. In terms of biological role, autophagy factor required for autophagosome formation. In Xenopus laevis (African clawed frog), this protein is Autophagy-related protein 101 (atg101).